A 196-amino-acid polypeptide reads, in one-letter code: UMP-CMP kinase (196 aa).

13–18 contacts ATP; it reads GAGKGT. The residue at position 33 (Ser33) is a Phosphoserine. The segment at 33–63 is NMP; that stretch reads SAGELLRDERKNPDSQYGELIEKYIKDGKIV. An a ribonucleoside 5'-phosphate-binding site is contributed by Arg39. N6-acetyllysine occurs at positions 43 and 55. A ribonucleoside 5'-phosphate contacts are provided by residues 61 to 63 and 93 to 96; these read KIV and GFPR. Asn100 serves as a coordination point for CMP. Residue Lys106 is modified to N6-succinyllysine. An LID region spans residues 133 to 143; sequence ERGKSSGRSDD. Arg134 serves as a coordination point for ATP. Residues Arg140 and Arg151 each contribute to the a ribonucleoside 5'-phosphate site. Lys179 is a binding site for ATP. Phosphoserine is present on Ser180.

The protein belongs to the adenylate kinase family. UMP-CMP kinase subfamily. Monomer. It depends on Mg(2+) as a cofactor.

The protein localises to the nucleus. Its subcellular location is the cytoplasm. The enzyme catalyses CMP + ATP = CDP + ADP. It carries out the reaction dCMP + ATP = dCDP + ADP. The catalysed reaction is UMP + ATP = UDP + ADP. It catalyses the reaction a 2'-deoxyribonucleoside 5'-diphosphate + ATP = a 2'-deoxyribonucleoside 5'-triphosphate + ADP. The enzyme catalyses a ribonucleoside 5'-diphosphate + ATP = a ribonucleoside 5'-triphosphate + ADP. Functionally, catalyzes the phosphorylation of pyrimidine nucleoside monophosphates at the expense of ATP. Plays an important role in de novo pyrimidine nucleotide biosynthesis. Has preference for UMP and CMP as phosphate acceptors. Also displays broad nucleoside diphosphate kinase activity. This is UMP-CMP kinase from Sus scrofa (Pig).